Consider the following 331-residue polypeptide: 5'-AMP-activated protein kinase subunit gamma-1 (331 aa).

A compositionally biased stretch (polar residues) spans 1-12; sequence METVISSDSSPA. The tract at residues 1–26 is disordered; it reads METVISSDSSPAVENEHPQETPESNN. 3 CBS domains span residues 43–103, 125–187, and 198–260; these read PTSS…KSAL, SFKP…PKPE, and IGTY…NLDV. ADP-binding positions include R70, 85–90, V130, 151–152, and K170; these read MLTITD and HR. AMP contacts are provided by residues R70, 85 to 90, V130, H151, 151 to 152, K170, T200, A205, 226 to 227, and 242 to 245; these read MLTITD, HR, SA, and SKFD. ATP-binding positions include R70, 85–90, V130, 151–152, R152, and K170; these read MLTITD and HR. Positions 138–159 match the AMPK pseudosubstrate motif; it reads LFDAVSSLIRNKIHRLPVIDPE. 242 to 245 is an ADP binding site; the sequence is SKFD. ATP is bound at residue 242–245; it reads SKFD. Position 261 is a phosphoserine; by ULK1 (S261). Position 263 is a phosphothreonine; by ULK1 (T263). R269 provides a ligand contact to ADP. Position 269 (R269) interacts with AMP. Residue R269 coordinates ATP. A Phosphoserine; by ULK1 modification is found at S270. A CBS 4 domain is found at 272-329; that stretch reads YFEGVLKCYLHETLETIINRLVEAEVHRLVVVDENDVVKGIVSLSDILQALVLTGGEK. Residues L277 and 298–299 each bind ADP; that span reads HR. Residues L277, H298, 298–299, and 314–317 each bind AMP; these read HR and SLSD. ATP is bound by residues L277 and 298-299; that span reads HR.

The protein belongs to the 5'-AMP-activated protein kinase gamma subunit family. In terms of assembly, AMPK is a heterotrimer of an alpha catalytic subunit (PRKAA1 or PRKAA2), a beta (PRKAB1 or PRKAB2) and a gamma non-catalytic subunits (PRKAG1, PRKAG2 or PRKAG3). Interacts with FNIP1 and FNIP2. Phosphorylated by ULK1 and ULK2; leading to negatively regulate AMPK activity and suggesting the existence of a regulatory feedback loop between ULK1, ULK2 and AMPK. In terms of processing, glycosylated; O-GlcNAcylated by OGT, promoting the AMP-activated protein kinase (AMPK) activity.

Its function is as follows. AMP/ATP-binding subunit of AMP-activated protein kinase (AMPK), an energy sensor protein kinase that plays a key role in regulating cellular energy metabolism. In response to reduction of intracellular ATP levels, AMPK activates energy-producing pathways and inhibits energy-consuming processes: inhibits protein, carbohydrate and lipid biosynthesis, as well as cell growth and proliferation. AMPK acts via direct phosphorylation of metabolic enzymes, and by longer-term effects via phosphorylation of transcription regulators. Also acts as a regulator of cellular polarity by remodeling the actin cytoskeleton; probably by indirectly activating myosin. Gamma non-catalytic subunit mediates binding to AMP, ADP and ATP, leading to activate or inhibit AMPK: AMP-binding results in allosteric activation of alpha catalytic subunit (PRKAA1 or PRKAA2) both by inducing phosphorylation and preventing dephosphorylation of catalytic subunits. ADP also stimulates phosphorylation, without stimulating already phosphorylated catalytic subunit. ATP promotes dephosphorylation of catalytic subunit, rendering the AMPK enzyme inactive. In Homo sapiens (Human), this protein is 5'-AMP-activated protein kinase subunit gamma-1 (PRKAG1).